Here is a 382-residue protein sequence, read N- to C-terminus: Deoxyhypusine synthase (382 aa).

NAD(+)-binding positions include 108 to 112 (SNLIS), 134 to 136 (TAG), glutamate 140, and aspartate 257. Spermidine is bound at residue 139 to 140 (EE). Spermidine is bound at residue aspartate 262. Glycine 304 serves as a coordination point for NAD(+). Histidine 309 is a spermidine binding site. 329–330 (TG) contributes to the NAD(+) binding site. Spermidine contacts are provided by residues 335–337 (GSD) and 344–350 (EAVSWGK). Residue lysine 350 is the Nucleophile of the active site. Position 363-364 (363-364 (DV)) interacts with NAD(+).

The protein belongs to the deoxyhypusine synthase family. NAD(+) is required as a cofactor.

It carries out the reaction [eIF5A protein]-L-lysine + spermidine = [eIF5A protein]-deoxyhypusine + propane-1,3-diamine. It functions in the pathway protein modification; eIF5A hypusination. In terms of biological role, catalyzes the NAD-dependent oxidative cleavage of spermidine and the subsequent transfer of the butylamine moiety of spermidine to the epsilon-amino group of a specific lysine residue of the eIF-5A precursor protein to form the intermediate deoxyhypusine residue. In Eremothecium gossypii (strain ATCC 10895 / CBS 109.51 / FGSC 9923 / NRRL Y-1056) (Yeast), this protein is Deoxyhypusine synthase (DYS1).